A 547-amino-acid polypeptide reads, in one-letter code: ATP synthase subunit beta, mitochondrial (547 aa).

The transit peptide at 1–45 (MASRRLLSSFLRSSTRRSLRPSFSNPRPSFLTSYCSSPASILRRY) directs the protein to the mitochondrion. Residues 52 to 62 (KEPAASKPAGT) show a composition bias toward low complexity. The disordered stretch occupies residues 52-74 (KEPAASKPAGTAGTGKGTITDEK). 226 to 233 (GGDWVGKT) contacts ATP.

It belongs to the ATPase alpha/beta chains family. In terms of assembly, F-type ATPases have 2 components, CF(1) - the catalytic core - and CF(0) - the membrane proton channel. CF(1) has five subunits: alpha(3), beta(3), gamma(1), delta(1), epsilon(1). CF(0) has three main subunits: a, b and c.

The protein localises to the mitochondrion. Its subcellular location is the mitochondrion inner membrane. The enzyme catalyses ATP + H2O + 4 H(+)(in) = ADP + phosphate + 5 H(+)(out). Mitochondrial membrane ATP synthase (F(1)F(0) ATP synthase or Complex V) produces ATP from ADP in the presence of a proton gradient across the membrane which is generated by electron transport complexes of the respiratory chain. F-type ATPases consist of two structural domains, F(1) - containing the extramembraneous catalytic core, and F(0) - containing the membrane proton channel, linked together by a central stalk and a peripheral stalk. During catalysis, ATP synthesis in the catalytic domain of F(1) is coupled via a rotary mechanism of the central stalk subunits to proton translocation. Subunits alpha and beta form the catalytic core in F(1). Rotation of the central stalk against the surrounding alpha(3)beta(3) subunits leads to hydrolysis of ATP in three separate catalytic sites on the beta subunits. This is ATP synthase subunit beta, mitochondrial (ATPB) from Daucus carota (Wild carrot).